Reading from the N-terminus, the 160-residue chain is SsrA-binding protein (160 aa).

This sequence belongs to the SmpB family.

The protein localises to the cytoplasm. In terms of biological role, required for rescue of stalled ribosomes mediated by trans-translation. Binds to transfer-messenger RNA (tmRNA), required for stable association of tmRNA with ribosomes. tmRNA and SmpB together mimic tRNA shape, replacing the anticodon stem-loop with SmpB. tmRNA is encoded by the ssrA gene; the 2 termini fold to resemble tRNA(Ala) and it encodes a 'tag peptide', a short internal open reading frame. During trans-translation Ala-aminoacylated tmRNA acts like a tRNA, entering the A-site of stalled ribosomes, displacing the stalled mRNA. The ribosome then switches to translate the ORF on the tmRNA; the nascent peptide is terminated with the 'tag peptide' encoded by the tmRNA and targeted for degradation. The ribosome is freed to recommence translation, which seems to be the essential function of trans-translation. This is SsrA-binding protein from Actinobacillus succinogenes (strain ATCC 55618 / DSM 22257 / CCUG 43843 / 130Z).